Reading from the N-terminus, the 457-residue chain is Mannose-6-phosphate isomerase (457 aa).

Zn(2+) contacts are provided by Gln-108, His-110, Glu-135, and His-292. The active site involves Arg-311.

It belongs to the mannose-6-phosphate isomerase type 1 family. Zn(2+) serves as cofactor.

Its subcellular location is the cytoplasm. The enzyme catalyses D-mannose 6-phosphate = D-fructose 6-phosphate. It participates in nucleotide-sugar biosynthesis; GDP-alpha-D-mannose biosynthesis; alpha-D-mannose 1-phosphate from D-fructose 6-phosphate: step 1/2. Involved in the synthesis of the GDP-mannose and dolichol-phosphate-mannose required for a number of critical mannosyl transfer reactions. The polypeptide is Mannose-6-phosphate isomerase (pmi1) (Aspergillus fumigatus (strain ATCC MYA-4609 / CBS 101355 / FGSC A1100 / Af293) (Neosartorya fumigata)).